Reading from the N-terminus, the 262-residue chain is Glutamate racemase (262 aa).

Substrate is bound by residues 5-6 (DS) and 37-38 (YG). Cys-69 acts as the Proton donor/acceptor in catalysis. 70–71 (NT) serves as a coordination point for substrate. The active-site Proton donor/acceptor is the Cys-181. Residue 182–183 (TH) participates in substrate binding.

This sequence belongs to the aspartate/glutamate racemases family.

The catalysed reaction is L-glutamate = D-glutamate. Its pathway is cell wall biogenesis; peptidoglycan biosynthesis. Provides the (R)-glutamate required for cell wall biosynthesis. This chain is Glutamate racemase, found in Buchnera aphidicola subsp. Acyrthosiphon pisum (strain Tuc7).